Consider the following 1067-residue polypeptide: Kinesin-like protein KIF11 (1067 aa).

In terms of domain architecture, Kinesin motor spans 18–359 (NIQVVVRCRP…LEYANRAKNI (342 aa)). Residue 105-112 (GQTGTGKT) participates in ATP binding. The stretch at 365-480 (VNQKLTKRAL…SKEQLAQEAF (116 aa)) forms a coiled coil. Phosphothreonine; by CDK1 is present on Thr937. Ser1046 carries the phosphoserine; by NEK6 modification. The tract at residues 1048-1067 (IMDEAEQSLPKSKLPLRMQN) is disordered.

It belongs to the TRAFAC class myosin-kinesin ATPase superfamily. Kinesin family. BimC subfamily. As to quaternary structure, heterotetramer of two heavy and two light chains. Interacts with aurka. Post-translationally, phosphorylation of Thr-937 during mitosis controls the association of this protein with the spindle apparatus. In terms of processing, a subset of this protein primarily localized at the spindle pole is phosphorylated by NEK6 during mitosis. Phosphorylated on a serine residue by aurka.

It localises to the cytoplasm. Its subcellular location is the cytoskeleton. The protein localises to the spindle pole. Plus end-directed motor protein required for establishing a bipolar spindle. Associates with both interphase and mitotic spindle microtubules. May be involved in nuclear divisions taking place during the development of unfertilized eggs. Required in non-mitotic cells for transport of secretory proteins from the Golgi complex to the cell surface. The chain is Kinesin-like protein KIF11 from Xenopus tropicalis (Western clawed frog).